Consider the following 155-residue polypeptide: MPSTSMIEDRGEIERRRFEYLDHPADIQLHSWGTTIERAFEACLVSMFGYMTDLEKVEEQYEFYWKVSGDSMDGLLFQFLDEALNSFHAEPCFVAKRVEIMRFDKEKLEIEFRGWGESFDTSKHETEADIKSPTYSNMQIIEKSDRCDVYVIVDI.

Positions 26, 154, and 155 each coordinate Ca(2+).

The protein belongs to the archease family.

In terms of biological role, component of the tRNA-splicing ligase complex required to facilitate the enzymatic turnover of catalytic subunit RtcB. This chain is Protein archease-like, found in Caenorhabditis briggsae.